A 202-amino-acid chain; its full sequence is Complement component C8 gamma chain (202 aa).

A signal peptide spans Met1–Ala23. A disulfide bridge links Cys96 with Cys188. Asn173 carries an N-linked (GlcNAc...) asparagine glycan.

Belongs to the calycin superfamily. Lipocalin family. As to quaternary structure, heterotrimer of 3 chains: alpha (C8A), beta (C8B) and gamma (C8G); the alpha and gamma chains are disulfide bonded. Component of the membrane attack complex (MAC), composed of complement C5b, C6, C7, C8A, C8B, C8G and multiple copies of the pore-forming subunit C9.

The protein localises to the secreted. Its subcellular location is the target cell membrane. Its activity is regulated as follows. Membrane attack complex (MAC) assembly is inhibited by CD59, thereby protecting self-cells from damage during complement activation. MAC assembly is also inhibited by clusterin (CLU) chaperones that inhibit polymerization of C9. Functionally, component of the membrane attack complex (MAC), a multiprotein complex activated by the complement cascade, which inserts into a target cell membrane and forms a pore, leading to target cell membrane rupture and cell lysis. The MAC is initiated by proteolytic cleavage of C5 into complement C5b in response to the classical, alternative, lectin and GZMK complement pathways. The complement pathways consist in a cascade of proteins that leads to phagocytosis and breakdown of pathogens and signaling that strengthens the adaptive immune system. C8G, together with C8A and C8B, inserts into the target membrane, but does not form pores by itself. During MAC assembly, associates with C5b, C6 and C7 to form the C5b8 intermediate complex that inserts into the target membrane and traverses the bilayer increasing membrane rigidity. The sequence is that of Complement component C8 gamma chain (C8G) from Oryctolagus cuniculus (Rabbit).